The sequence spans 577 residues: Arginine--tRNA ligase (577 aa).

Residues 122-132 carry the 'HIGH' region motif; it reads PNVAKEMHVGH.

Belongs to the class-I aminoacyl-tRNA synthetase family. As to quaternary structure, monomer.

The protein localises to the cytoplasm. It carries out the reaction tRNA(Arg) + L-arginine + ATP = L-arginyl-tRNA(Arg) + AMP + diphosphate. The chain is Arginine--tRNA ligase from Escherichia coli O139:H28 (strain E24377A / ETEC).